We begin with the raw amino-acid sequence, 384 residues long: FAD-dependent urate hydroxylase (384 aa).

FAD contacts are provided by residues Gly-11, 30-31 (EA), Ser-43, and Val-125. Substrate is bound by residues Asn-178, Arg-204, and 216 to 218 (YFF). FAD is bound by residues Asp-285 and 295–299 (GQGGC).

This sequence belongs to the FAD-dependent urate hydroxylase family. FAD is required as a cofactor.

The catalysed reaction is urate + NADH + O2 + H(+) = 5-hydroxyisourate + NAD(+) + H2O. It functions in the pathway purine metabolism; urate degradation. Functionally, catalyzes the hydroxylation of uric acid to 5-hydroxyisourate. The chain is FAD-dependent urate hydroxylase (hpxO) from Klebsiella pneumoniae.